Consider the following 126-residue polypeptide: Large ribosomal subunit protein bL19 (126 aa).

This sequence belongs to the bacterial ribosomal protein bL19 family.

This protein is located at the 30S-50S ribosomal subunit interface and may play a role in the structure and function of the aminoacyl-tRNA binding site. The polypeptide is Large ribosomal subunit protein bL19 (Bradyrhizobium diazoefficiens (strain JCM 10833 / BCRC 13528 / IAM 13628 / NBRC 14792 / USDA 110)).